The following is a 58-amino-acid chain: Small ribosomal subunit protein bS21 (58 aa).

Residues Lys-34–Lys-58 are disordered. Positions Val-43–Lys-58 are enriched in basic residues.

This sequence belongs to the bacterial ribosomal protein bS21 family.

The chain is Small ribosomal subunit protein bS21 from Clostridium acetobutylicum (strain ATCC 824 / DSM 792 / JCM 1419 / IAM 19013 / LMG 5710 / NBRC 13948 / NRRL B-527 / VKM B-1787 / 2291 / W).